A 482-amino-acid polypeptide reads, in one-letter code: MKRLFSKSLCTSAAGANLKPPPADSAAIAKLILSSPNTTHQDDQFLLSTKTTPWTPNLVNSVLKRLWNHGPKALQFFHFLDNHHREYVHDASSFDLAIDIAARLHLHPTVWSLIHRMRSLRIGPSPKTFAIVAERYASAGKPDKAVKLFLNMHEHGCFQDLASFNTILDVLCKSKRVEKAYELFRALRGRFSVDTVTYNVILNGWCLIKRTPKALEVLKEMVERGINPNLTTYNTMLKGFFRAGQIRHAWEFFLEMKKRDCEIDVVTYTTVVHGFGVAGEIKRARNVFDEMIREGVLPSVATYNAMIQVLCKKDNVENAVVMFEEMVRRGYEPNVTTYNVLIRGLFHAGEFSRGEELMQRMENEGCEPNFQTYNMMIRYYSECSEVEKALGLFEKMGSGDCLPNLDTYNILISGMFVRKRSEDMVVAGKLLLEMVERGFIPRKFTFNRVLNGLLLTGNQAFAKEILRLQSKSGSRLLRKFRL.

PPR repeat units follow at residues 90–124, 125–159, 160–190, 194–228, 229–263, 264–298, 299–333, 334–368, 369–403, 404–441, and 442–476; these read DASS…RIGP, SPKT…GCFQ, DLAS…LRGR, DTVT…GINP, NLTT…DCEI, DVVT…GVLP, SVAT…GYEP, NVTT…GCEP, NFQT…DCLP, NLDT…GFIP, and RKFT…GSRL.

It belongs to the PPR family. P subfamily.

The protein localises to the mitochondrion. Required for the trans-splicing of intron 1 of the mitochondrial nad1 transcript encoding the ND1 subunit of the mitochondrial membrane respiratory chain NADH dehydrogenase (Complex I). This chain is Pentatricopeptide repeat-containing protein At1g74900, mitochondrial (OTP43), found in Arabidopsis thaliana (Mouse-ear cress).